A 420-amino-acid polypeptide reads, in one-letter code: Protein STB1 (420 aa).

At Ser-2 the chain carries N-acetylserine. Positions 2–70 (SQPQMSPEKE…DEDHKTLLEA (69 aa)) are interaction with SWI6. At Ser-7 the chain carries Phosphoserine. Disordered stretches follow at residues 30–187 (QLKL…SDNT) and 273–319 (DSPS…ELNG). A compositionally biased stretch (basic and acidic residues) spans 43 to 55 (RKQDSTTKKRSGE). Ser-72 bears the Phosphoserine mark. Phosphothreonine is present on Thr-99. Ser-102 is subject to Phosphoserine. A compositionally biased stretch (basic and acidic residues) spans 106-122 (RKAEDRSQQIKPRKEDT). Low complexity predominate over residues 156-169 (NNNNSSNHSNNNNN). Over residues 277–319 (LYLSNNNGSVQATLSPQQRRKPTTNTLHPPSNVPTTPSRELNG) the composition is skewed to polar residues. Phosphothreonine is present on Thr-419.

As to quaternary structure, interacts with the ANK repeats of SWI6. The interaction with SWI6 is required for function. Interacts with SIN3. In terms of processing, phosphorylated by CDC28 in a cell cycle-dependent manner, inhibiting the interaction with SWI6.

Its subcellular location is the cytoplasm. It is found in the nucleus. Its function is as follows. Involved in the regulation and timing of MBF-dependent transcription in late G1 of the cell cycle. The chain is Protein STB1 (STB1) from Saccharomyces cerevisiae (strain ATCC 204508 / S288c) (Baker's yeast).